The primary structure comprises 342 residues: tRNA N6-adenosine threonylcarbamoyltransferase (342 aa).

2 residues coordinate Fe cation: histidine 114 and histidine 118. Substrate is bound by residues 136-140 (LVSGG), aspartate 169, glycine 182, aspartate 186, and asparagine 275. Residue aspartate 301 coordinates Fe cation.

Belongs to the KAE1 / TsaD family. The cofactor is Fe(2+).

Its subcellular location is the cytoplasm. The enzyme catalyses L-threonylcarbamoyladenylate + adenosine(37) in tRNA = N(6)-L-threonylcarbamoyladenosine(37) in tRNA + AMP + H(+). In terms of biological role, required for the formation of a threonylcarbamoyl group on adenosine at position 37 (t(6)A37) in tRNAs that read codons beginning with adenine. Is involved in the transfer of the threonylcarbamoyl moiety of threonylcarbamoyl-AMP (TC-AMP) to the N6 group of A37, together with TsaE and TsaB. TsaD likely plays a direct catalytic role in this reaction. The polypeptide is tRNA N6-adenosine threonylcarbamoyltransferase (Streptococcus pyogenes serotype M4 (strain MGAS10750)).